Consider the following 279-residue polypeptide: Small ribosomal subunit protein uS2 (279 aa).

A disordered region spans residues 255–279 (LLAGATTAAPEAAAGEAAAAPEQSS).

Belongs to the universal ribosomal protein uS2 family.

The protein is Small ribosomal subunit protein uS2 of Mycolicibacterium gilvum (strain PYR-GCK) (Mycobacterium gilvum (strain PYR-GCK)).